Reading from the N-terminus, the 163-residue chain is Large ribosomal subunit protein uL10 (163 aa).

It belongs to the universal ribosomal protein uL10 family. Part of the ribosomal stalk of the 50S ribosomal subunit. The N-terminus interacts with L11 and the large rRNA to form the base of the stalk. The C-terminus forms an elongated spine to which L12 dimers bind in a sequential fashion forming a multimeric L10(L12)X complex.

In terms of biological role, forms part of the ribosomal stalk, playing a central role in the interaction of the ribosome with GTP-bound translation factors. The chain is Large ribosomal subunit protein uL10 from Histophilus somni (strain 2336) (Haemophilus somnus).